A 418-amino-acid polypeptide reads, in one-letter code: Serine hydroxymethyltransferase (418 aa).

(6S)-5,6,7,8-tetrahydrofolate is bound by residues L121 and 125–127; that span reads GHL. K230 is subject to N6-(pyridoxal phosphate)lysine. A (6S)-5,6,7,8-tetrahydrofolate-binding site is contributed by 356–358; it reads SPF.

The protein belongs to the SHMT family. In terms of assembly, homodimer. Pyridoxal 5'-phosphate serves as cofactor.

It localises to the cytoplasm. The enzyme catalyses (6R)-5,10-methylene-5,6,7,8-tetrahydrofolate + glycine + H2O = (6S)-5,6,7,8-tetrahydrofolate + L-serine. It participates in one-carbon metabolism; tetrahydrofolate interconversion. The protein operates within amino-acid biosynthesis; glycine biosynthesis; glycine from L-serine: step 1/1. Its function is as follows. Catalyzes the reversible interconversion of serine and glycine with tetrahydrofolate (THF) serving as the one-carbon carrier. This reaction serves as the major source of one-carbon groups required for the biosynthesis of purines, thymidylate, methionine, and other important biomolecules. Also exhibits THF-independent aldolase activity toward beta-hydroxyamino acids, producing glycine and aldehydes, via a retro-aldol mechanism. The chain is Serine hydroxymethyltransferase from Pseudoalteromonas translucida (strain TAC 125).